A 339-amino-acid chain; its full sequence is Tetracenomycin polyketide synthesis 8-O-methyl transferase TcmO (339 aa).

Residues Asp-200 and Gly-226–Phe-228 each bind S-adenosyl-L-methionine. The Proton acceptor role is filled by His-246.

It belongs to the class I-like SAM-binding methyltransferase superfamily. Cation-independent O-methyltransferase family.

The protein operates within antibiotic biosynthesis; tetracenomycin C biosynthesis. This chain is Tetracenomycin polyketide synthesis 8-O-methyl transferase TcmO (tcmO), found in Streptomyces glaucescens.